Here is a 322-residue protein sequence, read N- to C-terminus: Dirigent protein 9 (322 aa).

The signal sequence occupies residues 1-20 (MAKALHITIFLFLISSNLLA).

The protein belongs to the plant dirigent protein family. As to quaternary structure, homodimer.

Its subcellular location is the secreted. The protein localises to the extracellular space. It localises to the apoplast. Its function is as follows. Dirigent proteins impart stereoselectivity on the phenoxy radical-coupling reaction, yielding optically active lignans from two molecules of coniferyl alcohol in the biosynthesis of lignans, flavonolignans, and alkaloids and thus plays a central role in plant secondary metabolism. The sequence is that of Dirigent protein 9 (DIR9) from Arabidopsis thaliana (Mouse-ear cress).